Consider the following 286-residue polypeptide: Beta-lactamase TEM (286 aa).

The N-terminal stretch at 1 to 23 is a signal peptide; it reads MSIQHFRVALIPFFAAFCLPVFA. The Acyl-ester intermediate role is filled by Ser-68. Cys-75 and Cys-121 are oxidised to a cystine. Glu-166 functions as the Proton acceptor in the catalytic mechanism. 232 to 234 provides a ligand contact to substrate; the sequence is KSG.

Belongs to the class-A beta-lactamase family.

The enzyme catalyses a beta-lactam + H2O = a substituted beta-amino acid. TEM-type are the most prevalent beta-lactamases in enterobacteria; they hydrolyze the beta-lactam bond in susceptible beta-lactam antibiotics, thus conferring resistance to penicillins and cephalosporins. TEM-3 and TEM-4 are capable of hydrolyzing cefotaxime and ceftazidime. TEM-5 is capable of hydrolyzing ceftazidime. TEM-6 is capable of hydrolyzing ceftazidime and aztreonam. TEM-8/CAZ-2, TEM-16/CAZ-7 and TEM-24/CAZ-6 are markedly active against ceftazidime. IRT-4 shows resistance to beta-lactamase inhibitors. The sequence is that of Beta-lactamase TEM (bla) from Escherichia coli.